We begin with the raw amino-acid sequence, 131 residues long: Glycine cleavage system H protein (131 aa).

The region spanning 24 to 106 is the Lipoyl-binding domain; sequence RAIVGVSDHA…YGEGWIMVIE (83 aa). Lys65 is modified (N6-lipoyllysine).

This sequence belongs to the GcvH family. The glycine cleavage system is composed of four proteins: P, T, L and H. Requires (R)-lipoate as cofactor.

The glycine cleavage system catalyzes the degradation of glycine. The H protein shuttles the methylamine group of glycine from the P protein to the T protein. This chain is Glycine cleavage system H protein, found in Xylella fastidiosa (strain Temecula1 / ATCC 700964).